The following is a 226-amino-acid chain: Adenylate kinase (226 aa).

Gly11 to Thr16 is a binding site for ATP. Residues Ser31–Val64 are NMP. AMP-binding positions include Asn62–Val64, Gly90–Arg93, and Gln97. The interval Gly127 to Asp164 is LID. Residues Arg128 and Thr137 to Tyr138 contribute to the ATP site. AMP-binding residues include Arg161 and Arg172. Gln205 contributes to the ATP binding site.

The protein belongs to the adenylate kinase family. As to quaternary structure, monomer.

It is found in the cytoplasm. It catalyses the reaction AMP + ATP = 2 ADP. It participates in purine metabolism; AMP biosynthesis via salvage pathway; AMP from ADP: step 1/1. In terms of biological role, catalyzes the reversible transfer of the terminal phosphate group between ATP and AMP. Plays an important role in cellular energy homeostasis and in adenine nucleotide metabolism. The polypeptide is Adenylate kinase (Blochmanniella floridana).